We begin with the raw amino-acid sequence, 398 residues long: S-adenosylmethionine synthase (398 aa).

ATP is bound at residue His-17. A Mg(2+)-binding site is contributed by Asp-19. Glu-45 serves as a coordination point for K(+). L-methionine-binding residues include Glu-58 and Gln-101. The interval 101 to 111 (QSPDIAQGVDK) is flexible loop. Residues 176–178 (DGK), 243–244 (RF), Asp-252, 258–259 (RK), and Lys-279 contribute to the ATP site. Asp-252 contributes to the L-methionine binding site. L-methionine is bound at residue Lys-283.

The protein belongs to the AdoMet synthase family. Homotetramer; dimer of dimers. Mg(2+) serves as cofactor. It depends on K(+) as a cofactor.

The protein localises to the cytoplasm. It carries out the reaction L-methionine + ATP + H2O = S-adenosyl-L-methionine + phosphate + diphosphate. Its pathway is amino-acid biosynthesis; S-adenosyl-L-methionine biosynthesis; S-adenosyl-L-methionine from L-methionine: step 1/1. Catalyzes the formation of S-adenosylmethionine (AdoMet) from methionine and ATP. The overall synthetic reaction is composed of two sequential steps, AdoMet formation and the subsequent tripolyphosphate hydrolysis which occurs prior to release of AdoMet from the enzyme. This chain is S-adenosylmethionine synthase, found in Staphylococcus aureus (strain Mu3 / ATCC 700698).